Consider the following 654-residue polypeptide: Pentatricopeptide repeat-containing protein At3g16610 (654 aa).

PPR repeat units follow at residues 1 to 32, 34 to 64, 67 to 101, 102 to 136, 137 to 171, 172 to 203, 204 to 238, 239 to 269, 270 to 304, 307 to 341, 342 to 372, 373 to 407, 408 to 442, 443 to 473, 474 to 508, 509 to 543, and 546 to 576; these read MFLSLLETCIRSRNLVLGQVIHQHLLKRSLTL, SSTVLVNLTRLYASCNEVELARHVFDEIPHP, NPIAWDLMIRAYASNDFAEKALDLYYKMLNSGVRP, TKYTYPFVLKACAGLRAIDDGKLIHSHVNCSDFAT, DMYVCTALVDFYAKCGELEMAIKVFDEMPKRDMVA, WNAMISGFSLHCCLTDVIGLFLDMRRIDGLSP, NLSTIVGMFPALGRAGALREGKAVHGYCTRMGFSN, DLVVKTGILDVYAKSKCIIYARRVFDLDFKK, NEVTWSAMIGGYVENEMIKEAGEVFFQMLVNDNVA, TPVAIGLILMGCARFGDLSGGRCVHCYAVKAGFIL, DLTVQNTIISFYAKYGSLCDAFRQFSEIGLK, DVISYNSLITGCVVNCRPEESFRLFHEMRTSGIRP, DITTLLGVLTACSHLAALGHGSSCHGYCVVHGYAV, NTSICNALMDMYTKCGKLDVAKRVFDTMHKR, DIVSWNTMLFGFGIHGLGKEALSLFNSMQETGVNP, DEVTLLAILSACSHSGLVDEGKQLFNSMSRGDFNV, and RIDHYNCMTDLLARAGYLDEAYDFVNKMPFE. The tract at residues 581–654 is type E motif; degenerate; the sequence is VLGTLLSACW…KTPGYSWVDV (74 aa).

This sequence belongs to the PPR family. PCMP-E subfamily.

This Arabidopsis thaliana (Mouse-ear cress) protein is Pentatricopeptide repeat-containing protein At3g16610 (PCMP-E91).